We begin with the raw amino-acid sequence, 88 residues long: MLATEKKQEIIKAFKKHDSDTGSPEVQIAILTERITYLTEHFKVHKKDHHSRRGLLKLVGQRRRLLDYLKGKEVARYKAVIERLGIRR.

The protein belongs to the universal ribosomal protein uS15 family. In terms of assembly, part of the 30S ribosomal subunit. Forms a bridge to the 50S subunit in the 70S ribosome, contacting the 23S rRNA.

One of the primary rRNA binding proteins, it binds directly to 16S rRNA where it helps nucleate assembly of the platform of the 30S subunit by binding and bridging several RNA helices of the 16S rRNA. Its function is as follows. Forms an intersubunit bridge (bridge B4) with the 23S rRNA of the 50S subunit in the ribosome. This is Small ribosomal subunit protein uS15 from Pelobacter propionicus (strain DSM 2379 / NBRC 103807 / OttBd1).